The sequence spans 156 residues: ATP synthase subunit b (156 aa).

The helical transmembrane segment at 7–29 threads the bilayer; sequence LLGQAISFLLFVWFCMKFVWPPL.

Belongs to the ATPase B chain family. In terms of assembly, F-type ATPases have 2 components, F(1) - the catalytic core - and F(0) - the membrane proton channel. F(1) has five subunits: alpha(3), beta(3), gamma(1), delta(1), epsilon(1). F(0) has three main subunits: a(1), b(2) and c(10-14). The alpha and beta chains form an alternating ring which encloses part of the gamma chain. F(1) is attached to F(0) by a central stalk formed by the gamma and epsilon chains, while a peripheral stalk is formed by the delta and b chains.

It localises to the cell inner membrane. F(1)F(0) ATP synthase produces ATP from ADP in the presence of a proton or sodium gradient. F-type ATPases consist of two structural domains, F(1) containing the extramembraneous catalytic core and F(0) containing the membrane proton channel, linked together by a central stalk and a peripheral stalk. During catalysis, ATP synthesis in the catalytic domain of F(1) is coupled via a rotary mechanism of the central stalk subunits to proton translocation. Its function is as follows. Component of the F(0) channel, it forms part of the peripheral stalk, linking F(1) to F(0). The chain is ATP synthase subunit b from Shewanella halifaxensis (strain HAW-EB4).